The following is a 273-amino-acid chain: NADH-ubiquinone oxidoreductase 29.9 kDa subunit, mitochondrial (273 aa).

Residues 1–8 (MRAALRLL) constitute a mitochondrion transit peptide.

Belongs to the complex I NDUFA5 subunit family. As to quaternary structure, complex I is composed of about 40 different subunits.

It is found in the mitochondrion inner membrane. In terms of biological role, accessory subunit of the mitochondrial membrane respiratory chain NADH dehydrogenase (Complex I), that is believed not to be involved in catalysis. Complex I functions in the transfer of electrons from NADH to the respiratory chain. The immediate electron acceptor for the enzyme is believed to be ubiquinone. The chain is NADH-ubiquinone oxidoreductase 29.9 kDa subunit, mitochondrial (nuo-32) from Neurospora crassa (strain ATCC 24698 / 74-OR23-1A / CBS 708.71 / DSM 1257 / FGSC 987).